A 146-amino-acid chain; its full sequence is Large ribosomal subunit protein uL15 (146 aa).

The tract at residues methionine 1–arginine 46 is disordered. The segment covering lysine 9 to glycine 19 has biased composition (basic residues). Over residues arginine 20–serine 30 the composition is skewed to gly residues.

This sequence belongs to the universal ribosomal protein uL15 family. Part of the 50S ribosomal subunit.

In terms of biological role, binds to the 23S rRNA. The protein is Large ribosomal subunit protein uL15 of Phytoplasma mali (strain AT).